A 479-amino-acid chain; its full sequence is Glutamyl-tRNA reductase (479 aa).

Substrate is bound by residues T48 to R51, S104, E109 to Q111, and Q115. Residue C49 is the Nucleophile of the active site. G189–G194 serves as a coordination point for NADP(+). The segment at D417–E455 is disordered.

The protein belongs to the glutamyl-tRNA reductase family. As to quaternary structure, homodimer.

It carries out the reaction (S)-4-amino-5-oxopentanoate + tRNA(Glu) + NADP(+) = L-glutamyl-tRNA(Glu) + NADPH + H(+). It participates in porphyrin-containing compound metabolism; protoporphyrin-IX biosynthesis; 5-aminolevulinate from L-glutamyl-tRNA(Glu): step 1/2. Functionally, catalyzes the NADPH-dependent reduction of glutamyl-tRNA(Glu) to glutamate 1-semialdehyde (GSA). The polypeptide is Glutamyl-tRNA reductase (Salinibacter ruber (strain DSM 13855 / M31)).